The chain runs to 300 residues: F-box/LRR-repeat protein 15 (300 aa).

M1 is modified (N-acetylmethionine). Residues 19 to 66 (LLDLPWEDVLLPHVLNWVPLRQLLRLQRVSRAFRALVQLHLARLRRFD) form the F-box domain. The interval 113–269 (NPQLRSVALA…EPSLSRLRKR (157 aa)) is interaction with SMURF1. LRR repeat units lie at residues 141–162 (RLQR…RGLA), 167–188 (ALEE…VYLA), 194–215 (GLRS…QELA), 220–241 (QLEH…RTLA), and 246–267 (ALRS…SRLR).

It belongs to the FBXL15 family. As to quaternary structure, part of the SCF (SKP1-CUL1-F-box) E3 ubiquitin-protein ligase complex SCF(FBXL15) composed of CUL1, SKP1, RBX1 and FBXL15. In terms of tissue distribution, expressed in heart, liver, spleen, bone, muscle, brain and kidney (at protein level).

It localises to the cytoplasm. It participates in protein modification; protein ubiquitination. Substrate recognition component of a SCF (SKP1-CUL1-F-box protein) E3 ubiquitin-protein ligase complex which mediates the ubiquitination and subsequent proteasomal degradation of SMURF1, thereby acting as a positive regulator of the BMP signaling pathway. Required for dorsal/ventral pattern formation and bone mass maintenance. Also mediates ubiquitination of SMURF2 and WWP2. In Mus musculus (Mouse), this protein is F-box/LRR-repeat protein 15 (Fbxl15).